A 402-amino-acid polypeptide reads, in one-letter code: Type II NADH:quinone oxidoreductase (402 aa).

FAD contacts are provided by residues 12 to 16 (GAGYA), 39 to 40 (NK), and Val-83. Residue Glu-172 is part of the active site. Residues Asp-302, 319–320 (AQ), and Lys-379 each bind FAD.

Belongs to the NADH dehydrogenase family. Requires FAD as cofactor.

It is found in the cell membrane. The catalysed reaction is a quinone + NADH + H(+) = a quinol + NAD(+). Its function is as follows. Alternative, nonproton pumping NADH:quinone oxidoreductase that delivers electrons to the respiratory chain by oxidation of NADH and reduction of quinones, and contributes to the regeneration of NAD(+). In Staphylococcus aureus (strain MSSA476), this protein is Type II NADH:quinone oxidoreductase.